The primary structure comprises 352 residues: Gap junction alpha-4 protein (352 aa).

Over 2–23 (GDWEFLEKLLDQVQEHSTSIGK) the chain is Cytoplasmic. The helical transmembrane segment at 24 to 46 (IWLMVLFIFRILILGLAGESVWG) threads the bilayer. Residues 47 to 76 (DEQSDFICNTEQPGCTNVCYDKAFPISHVR) lie on the Extracellular side of the membrane. The helical transmembrane segment at 77–99 (YWVLQFLFVSTPTLFYLGHVIYL) threads the bilayer. Residues 100-153 (SRREEKLKQKESELRALDDKEQVEQAIAIIEKKKMKLYIQEDGTVKIKGALMCT) are Cytoplasmic-facing. The chain crosses the membrane as a helical span at residues 154–176 (YLTSVIFKSLFEAGFLLGQWYLY). Topologically, residues 177–208 (GFVMTPIYVCERVPCPHKVDCFVSRPMEKTIF) are extracellular. A helical transmembrane segment spans residues 209–231 (IVFMLVVSLISLFLNVLELIHLV). Residues 232–352 (CKSMIDTLKK…SSSASKKQYV (121 aa)) lie on the Cytoplasmic side of the membrane. Positions 330–352 (KTHSTMEKPSTRASSSASKKQYV) are disordered. Residues 340–352 (TRASSSASKKQYV) are compositionally biased toward polar residues.

This sequence belongs to the connexin family. Alpha-type (group II) subfamily. A connexon is composed of a hexamer of connexins.

The protein resides in the cell membrane. It is found in the cell junction. Its subcellular location is the gap junction. Functionally, one gap junction consists of a cluster of closely packed pairs of transmembrane channels, the connexons, through which materials of low MW diffuse from one cell to a neighboring cell. The protein is Gap junction alpha-4 protein (gja4) of Xenopus tropicalis (Western clawed frog).